The chain runs to 102 residues: Integration host factor subunit alpha (102 aa).

The protein belongs to the bacterial histone-like protein family. In terms of assembly, heterodimer of an alpha and a beta chain.

In terms of biological role, this protein is one of the two subunits of integration host factor, a specific DNA-binding protein that functions in genetic recombination as well as in transcriptional and translational control. This chain is Integration host factor subunit alpha, found in Buchnera aphidicola subsp. Acyrthosiphon pisum (strain 5A).